The following is a 254-amino-acid chain: E3 ubiquitin-protein ligase NEURL3 (254 aa).

An NHR domain is found at 17–174 (ALSFHGNATG…TTKAIELLDP (158 aa)). The RING-type zinc-finger motif lies at 197–236 (CVICFHNTANTRLMPCGHSHFCGSCAWHIFKDTARCPICR).

As to expression, expressed in alveolar epithelial type II cells.

Its subcellular location is the cytoplasm. The enzyme catalyses S-ubiquitinyl-[E2 ubiquitin-conjugating enzyme]-L-cysteine + [acceptor protein]-L-lysine = [E2 ubiquitin-conjugating enzyme]-L-cysteine + N(6)-ubiquitinyl-[acceptor protein]-L-lysine.. The protein operates within protein modification; protein ubiquitination. E3 ubiquitin-protein ligase that plays a role in various biological processes such as lung development or innate immunity. Seems to utilize UBE2E1. Promotes innate antiviral response by catalyzing 'Lys-63'-linked ubiquitination of IRF7. Plays an essential role in TLR4-mediated activation of MAPK pathways by promoting 'Lys-48'-linked polyubiquitination of the phosphatase DUSP1/MKP1. The chain is E3 ubiquitin-protein ligase NEURL3 (Neurl3) from Mus musculus (Mouse).